A 521-amino-acid polypeptide reads, in one-letter code: Myocyte-specific enhancer factor 2D (521 aa).

Residues 3-57 form the MADS-box domain; sequence RKKIQIQRITDERNRQVTFTKRKFGLMKKAYELSVLCDCEIALIIFNHSNKLFQY. Positions 58–86 form a DNA-binding region, mef2-type; the sequence is ASTDMDKVLLKYTEYNEPHESRTNADIIE. A phosphoserine mark is found at Ser98, Ser106, and Ser110. Ser121 carries the phosphoserine; by PKA modification. The tract at residues 174–207 is disordered; sequence TDPRLLSPQQPALQRNSVSPGLPQRPASAGAMLG. Ser180 is modified (phosphoserine; by MAPK7). Residues 180-192 are compositionally biased toward polar residues; it reads SPQQPALQRNSVS. The residue at position 190 (Ser190) is a Phosphoserine; by PKA. Phosphoserine is present on Ser231. Residues 244–266 are disordered; it reads NKVIPAKSPPPPTHSTQLGAPSR. Lys245 is modified (N6-acetyllysine). The residue at position 251 (Ser251) is a Phosphoserine. The segment at 286 to 292 is beta domain; sequence TEDHLDL. Disordered stretches follow at residues 357-407 and 437-521; these read SLGN…QSHL and SIKS…WTLK. The span at 373 to 400 shows a compositional bias: pro residues; the sequence is PQQPQPPQQQPPQPQQPQPQQPQQPQQP. Position 439 is an N6-acetyllysine; alternate (Lys439). Residue Lys439 forms a Glycyl lysine isopeptide (Lys-Gly) (interchain with G-Cter in SUMO); alternate linkage. At Ser444 the chain carries Phosphoserine.

This sequence belongs to the MEF2 family. Interacts with MYOG. Forms a complex with class II HDACs in undifferentiating cells. On myogenic differentiation, HDACs are released into the cytoplasm allowing MEF2s to interact with other proteins for activation. Interacts with HDAC4 (in undifferentiating cells); the interaction translocates MEF2D to nuclear dots. Forms a heterodimer with MEF2A. Interacts with MAPK7; the interaction phosphorylates but does not activate MEF2D. Interacts with CCAR2 and HDAC3. In terms of processing, phosphorylated on Ser-444 by CDK5 is required for Lys-439 sumoylation and inhibits transcriptional activity. In neurons, enhanced CDK5 activity induced by neurotoxins promotes caspase 3-mediated cleavage leading to neuron apoptosis. Phosphorylation on Ser-180 can be enhanced by EGF. Phosphorylated and activated by CaMK4. Post-translationally, acetylated on Lys-439 by CREBBP. Acetylated by EP300. Deacetylated by SIRT1 and HDAC3. Sumoylated on Lys-439 with SUMO2 but not SUMO1; which inhibits transcriptional activity and myogenic activity. Desumoylated by SENP3. In terms of processing, proteolytically cleaved in cerebellar granule neurons on several sites by caspase 7 following neurotoxicity. Preferentially cleaves the CDK5-mediated hyperphosphorylated form which leads to neuron apoptosis and transcriptional inactivation.

It localises to the nucleus. Its function is as follows. Transcriptional activator which binds specifically to the MEF2 element, 5'-YTA[AT](4)TAR-3', found in numerous muscle-specific, growth factor- and stress-induced genes. Mediates cellular functions not only in skeletal and cardiac muscle development, but also in neuronal differentiation and survival. Plays diverse roles in the control of cell growth, survival and apoptosis via p38 MAPK signaling in muscle-specific and/or growth factor-related transcription. Plays a critical role in the regulation of neuronal apoptosis. In Homo sapiens (Human), this protein is Myocyte-specific enhancer factor 2D (MEF2D).